The following is a 146-amino-acid chain: Transcription antitermination protein NusB (146 aa).

Belongs to the NusB family.

Functionally, involved in transcription antitermination. Required for transcription of ribosomal RNA (rRNA) genes. Binds specifically to the boxA antiterminator sequence of the ribosomal RNA (rrn) operons. This is Transcription antitermination protein NusB from Solibacter usitatus (strain Ellin6076).